Here is a 140-residue protein sequence, read N- to C-terminus: ATP synthase epsilon chain (140 aa).

This sequence belongs to the ATPase epsilon chain family. In terms of assembly, F-type ATPases have 2 components, CF(1) - the catalytic core - and CF(0) - the membrane proton channel. CF(1) has five subunits: alpha(3), beta(3), gamma(1), delta(1), epsilon(1). CF(0) has three main subunits: a, b and c.

It localises to the cell inner membrane. Produces ATP from ADP in the presence of a proton gradient across the membrane. The protein is ATP synthase epsilon chain of Herminiimonas arsenicoxydans.